Reading from the N-terminus, the 922-residue chain is Metabotropic glutamate receptor 7 (922 aa).

The first 34 residues, 1-34 (MVQLRKLLRVLTLMKFPCCVLEVLLCALAAAARG), serve as a signal peptide directing secretion. At 35–590 (QEMYAPHSIR…IIKLEWHSPW (556 aa)) the chain is on the extracellular side. Cysteines 67 and 109 form a disulfide. N-linked (GlcNAc...) asparagine glycosylation is present at N98. L-glutamate is bound by residues S159, 180 to 182 (AST), Y230, and D314. 7 cysteine pairs are disulfide-bonded: C249-C541, C374-C390, C430-C437, C523-C542, C527-C545, C548-C560, and C563-C576. K407 lines the L-glutamate pocket. N458 and N486 each carry an N-linked (GlcNAc...) asparagine glycan. N-linked (GlcNAc...) asparagine glycosylation occurs at N572. Residues 591 to 615 (AVIPVFLAMLGIIATIFVMATFIRY) traverse the membrane as a helical segment. Topologically, residues 616–627 (NDTPIVRASGRE) are cytoplasmic. A helical transmembrane segment spans residues 628–648 (LSYVLLTGIFLCYIITFLMIA). The Extracellular segment spans residues 649-654 (KPDVAV). A helical transmembrane segment spans residues 655-675 (CSFRRVFLGLGMCISYAALLT). Residues 676–702 (KTNRIYRIFEQGKKSVTAPRLISPTSQ) are Cytoplasmic-facing. The chain crosses the membrane as a helical span at residues 703-723 (LAITSSLISVQLLGVFIWFGV). Over 724 to 753 (DPPNIIIDYDEHKTMNPEQARGVLKCDITD) the chain is Extracellular. Residues 754–775 (LQIICSLGYSILLMVTCTVYAI) traverse the membrane as a helical segment. The Cytoplasmic segment spans residues 776–788 (KTRGVPENFNEAK). The helical transmembrane segment at 789–810 (PIGFTMYTTCIVWLAFIPIFFG) threads the bilayer. The Extracellular segment spans residues 811-825 (TAQSAEKLYIQTTTL). Residues 826–850 (TISMNLSASVALGMLYMPKVYIIIF) traverse the membrane as a helical segment. The Cytoplasmic segment spans residues 851 to 922 (HPELNVQKRK…VTWYTIPPTV (72 aa)).

Belongs to the G-protein coupled receptor 3 family. Homodimer. Interacts with PICK1.

The protein resides in the cell membrane. Functionally, G-protein coupled receptor activated by glutamate that regulates axon outgrowth through the MAPK-cAMP-PKA signaling pathway during neuronal development. Ligand binding causes a conformation change that triggers signaling via guanine nucleotide-binding proteins (G proteins) and modulates the activity of downstream effectors, such as adenylate cyclase that it inhibits. This chain is Metabotropic glutamate receptor 7 (GRM7), found in Pongo abelii (Sumatran orangutan).